The chain runs to 373 residues: MGSMDQSIAVKSPLTYAEALANTIMNTYTVEELPPANRWHYHQGVFLCGVLRLWEATGEKRYFEYAKAYADLLIDDNGNLLFRRDELDAIQAGLILFPLYEQTKDERYVKAAKRLRSLYGTLNRTSEGGFWHKDGYPYQMWLDGLYMGGPFALKYANLKQETELFDQVVLQESLMRKHTKDAKTGLFYHAWDEAKKMPWANEETGCSPEFWARSIGWYVMSLADMIEELPKKHPNRHVWKNTLQDMIKSICRYQDKETGLWYQIVDKGDRSDNWLESSGSCLYMYAIAKGINKGYLDRAYETTLLKAYQGLIQHKTETSEDGAFLVKDICVGTSAGFYDYYVSRERSTNDLHGAGAFILAMTELEPLFRSAGK.

Substrate contacts are provided by residues 40–41, D88, and 132–136; these read HY and HKDGY. D143 functions as the Proton donor in the catalytic mechanism. Substrate is bound by residues 213–217 and 333–334; these read RSIGW and TS.

The protein belongs to the glycosyl hydrolase 105 family. In terms of assembly, monomer.

It is found in the cytoplasm. It carries out the reaction 2-O-(4-deoxy-beta-L-threo-hex-4-enopyranuronosyl)-alpha-L-rhamnose + H2O = 5-dehydro-4-deoxy-D-glucuronate + L-rhamnopyranose. In terms of biological role, catalyzes the hydrolysis of unsaturated rhamnogalacturonan disaccharide to yield unsaturated D-galacturonic acid and L-rhamnose. It cannot act on unsaturated glucuronyl hydrolase (UGL) substrates containing unsaturated D-glucuronic acid at the non-reducing terminus, although the active pockets of YesR and UGL are very similar. The sequence is that of Unsaturated rhamnogalacturonyl hydrolase YteR (yteR) from Bacillus subtilis (strain 168).